A 230-amino-acid polypeptide reads, in one-letter code: MTDTSLQAALRAEHLSKVYDEGPARIQVLDDVSLTVARGEMVAIVGASGSGKSTLLHILGLLDVPTSGSLVVDGTATEGLSEARKSAVRNRSLGFVYQFHHLLPEFSALDNVAMPLIVRRMDRDQARLQAREVLGLVGLAAREGHYPGQLSGGERQRVALARALVTRPACVLADEPTGNLDRQTAQNMFELLSRVNRESGTAFAIVTHDPELAARADRQLHMANGRLLPG.

The region spanning 10 to 228 (LRAEHLSKVY…QLHMANGRLL (219 aa)) is the ABC transporter domain. Position 46-53 (46-53 (GASGSGKS)) interacts with ATP.

This sequence belongs to the ABC transporter superfamily. Lipoprotein translocase (TC 3.A.1.125) family. As to quaternary structure, the complex is composed of two ATP-binding proteins (LolD) and two transmembrane proteins (LolC and LolE).

The protein localises to the cell inner membrane. Functionally, part of the ABC transporter complex LolCDE involved in the translocation of mature outer membrane-directed lipoproteins, from the inner membrane to the periplasmic chaperone, LolA. Responsible for the formation of the LolA-lipoprotein complex in an ATP-dependent manner. This Bordetella avium (strain 197N) protein is Lipoprotein-releasing system ATP-binding protein LolD.